A 417-amino-acid chain; its full sequence is Leucine-rich repeat-containing protein 42 (417 aa).

LRR repeat units lie at residues 167-188, 195-215, 227-249, and 252-273; these read CLRS…LEHL, SLTE…RKMT, ALKV…FLFG, and LLQF…VKKI. The interval 360–399 is disordered; sequence FFRPEEQKDSDSSKSDKRQRSTKRTGADPGQEDCTIAPAT. Positions 362–378 are enriched in basic and acidic residues; the sequence is RPEEQKDSDSSKSDKRQ.

It belongs to the LRRC42 family.

In Xenopus tropicalis (Western clawed frog), this protein is Leucine-rich repeat-containing protein 42 (lrrc42).